The primary structure comprises 953 residues: Ubiquitin carboxyl-terminal hydrolase CYLD (953 aa).

An interaction with TRIP region spans residues 106-590 (CEERFSLFKN…FEIMIGKKKG (485 aa)). 2 CAP-Gly domains span residues 153–198 (LAER…VFVA) and 253–286 (DVLP…VQLC). 2 disordered regions span residues 313–349 (PPKL…RNRS) and 384–410 (SLTE…LSSE). Over residues 337-346 (TGSTSDPGTR) the composition is skewed to polar residues. Phosphoserine is present on residues Ser-384, Ser-415, and Ser-419. An interaction with TRAF2 region spans residues 391–466 (DFGHASPPLQ…LAVSSGNSHG (76 aa)). Residues 467–681 (LEVGSLAEVK…FTSEEKDPEE (215 aa)) are interaction with IKBKG/NEMO. The 44-residue stretch at 489-532 (GQPPGLNEVLAGLELEDECAGCTDGTFRGTRYFTCALKKALFVK) folds into the CAP-Gly 3 domain. One can recognise a USP domain in the interval 589-947 (KGIQGHYNSC…DAYMCMYQSP (359 aa)). Cys-598 serves as the catalytic Nucleophile. Residues 778–830 (LEDTPRQCRICGGLAMYECRECYDDPDISAGKIKQFCKTCNAQVHLHPKRLNH) are B-box. Cys-785, Cys-788, Cys-796, Cys-799, Cys-814, Cys-817, His-822, and His-830 together coordinate Zn(2+). The active-site Proton acceptor is the His-868.

This sequence belongs to the peptidase C19 family. Interacts (via CAP-Gly domain) with IKBKG/NEMO (via proline-rich C-terminal region). Interacts with TRAF2 and TRIP. Interacts with PLK1, DVL1, DVL3, MAVS, TBK1, IKKE and RIGI. Interacts (via CAP-Gly domain) with microtubules. Interacts with HDAC6 and BCL3. Interacts with MAP3K7. Identified in a complex with TRAF6 and SQSTM1. Interacts with OPTN and SQSTM1. Interacts with CEP350. Interacts with RNF31; the interaction is indirect and is mediated via SPATA2. Interacts with SPATA2 (via the PUB domain); the interaction is direct and recruits CYLD to the LUBAC complex, thereby regulating TNF-alpha-induced necroptosis. Phosphorylated on several serine residues by IKKA and/or IKKB in response to immune stimuli. Phosphorylation requires IKBKG. Phosphorylation abolishes TRAF2 deubiquitination, interferes with the activation of Jun kinases, and strongly reduces CD40-dependent gene activation by NF-kappa-B. Post-translationally, ubiquitinated. Polyubiquitinated in hepatocytes treated with palmitic acid. Ubiquitination is mediated by E3 ligase TRIM47 and leads to proteasomal degradation.

The protein resides in the cytoplasm. The protein localises to the perinuclear region. It localises to the cytoskeleton. Its subcellular location is the cell membrane. It is found in the microtubule organizing center. The protein resides in the centrosome. The protein localises to the spindle. It localises to the cilium basal body. The catalysed reaction is Thiol-dependent hydrolysis of ester, thioester, amide, peptide and isopeptide bonds formed by the C-terminal Gly of ubiquitin (a 76-residue protein attached to proteins as an intracellular targeting signal).. Deubiquitinase that specifically cleaves 'Lys-63'- and linear 'Met-1'-linked polyubiquitin chains and is involved in NF-kappa-B activation and TNF-alpha-induced necroptosis. Negatively regulates NF-kappa-B activation by deubiquitinating upstream signaling factors. Contributes to the regulation of cell survival, proliferation and differentiation via its effects on NF-kappa-B activation. Negative regulator of Wnt signaling. Inhibits HDAC6 and thereby promotes acetylation of alpha-tubulin and stabilization of microtubules. Plays a role in the regulation of microtubule dynamics, and thereby contributes to the regulation of cell proliferation, cell polarization, cell migration, and angiogenesis. Required for normal cell cycle progress and normal cytokinesis. Inhibits nuclear translocation of NF-kappa-B. Plays a role in the regulation of inflammation and the innate immune response, via its effects on NF-kappa-B activation. Dispensable for the maturation of intrathymic natural killer cells, but required for the continued survival of immature natural killer cells. Negatively regulates TNFRSF11A signaling and osteoclastogenesis. Involved in the regulation of ciliogenesis, allowing ciliary basal bodies to migrate and dock to the plasma membrane; this process does not depend on NF-kappa-B activation. Ability to remove linear ('Met-1'-linked) polyubiquitin chains regulates innate immunity and TNF-alpha-induced necroptosis: recruited to the LUBAC complex via interaction with SPATA2 and restricts linear polyubiquitin formation on target proteins. Regulates innate immunity by restricting linear polyubiquitin formation on RIPK2 in response to NOD2 stimulation. Involved in TNF-alpha-induced necroptosis by removing linear ('Met-1'-linked) polyubiquitin chains from RIPK1, thereby regulating the kinase activity of RIPK1. Negatively regulates intestinal inflammation by removing 'Lys-63' linked polyubiquitin chain of NLRP6, thereby reducing the interaction between NLRP6 and PYCARD/ASC and formation of the NLRP6 inflammasome. Does not catalyze deubiquitination of heterotypic 'Lys-63'-/'Lys-48'-linked branched ubiquitin chains. Removes 'Lys-63' linked polyubiquitin chain of MAP3K7, which inhibits phosphorylation and blocks downstream activation of the JNK-p38 kinase cascades. Also removes 'Lys-63'-linked polyubiquitin chains of MAP3K1 and MA3P3K3, which inhibit their interaction with MAP2K1 and MAP2K2. The protein is Ubiquitin carboxyl-terminal hydrolase CYLD (CYLD) of Bos taurus (Bovine).